Consider the following 605-residue polypeptide: Exo-beta-1,3-glucanase (605 aa).

The tract at residues 1-23 (MHVPPTDPARSAPPASPHRRRRP) is disordered. Residues 1–44 (MHVPPTDPARSAPPASPHRRRRPKALGLTALAAAMLMAVPTTQA) form the signal peptide. Residues Gln174, 194 to 196 (YGW), Gln217, 446 to 449 (WRAD), and 480 to 481 (EH) contribute to the substrate site. The active-site Proton donor is Glu502. A substrate-binding site is contributed by Tyr505.

This sequence belongs to the glycosyl hydrolase 55 family.

The protein localises to the secreted. It catalyses the reaction Successive hydrolysis of beta-D-glucose units from the non-reducing ends of (1-&gt;3)-beta-D-glucans, releasing alpha-glucose.. Its function is as follows. Exo-beta-1,3-glucanase that specifically hydrolyzes laminarin and laminarioligosaccharides, producing glucose and laminaribiose as end products. The sequence is that of Exo-beta-1,3-glucanase from Streptomyces sp. (strain SirexAA-E / ActE).